Here is a 156-residue protein sequence, read N- to C-terminus: Small ribosomal subunit protein uS7 (156 aa).

Belongs to the universal ribosomal protein uS7 family. Part of the 30S ribosomal subunit. Contacts proteins S9 and S11.

One of the primary rRNA binding proteins, it binds directly to 16S rRNA where it nucleates assembly of the head domain of the 30S subunit. Is located at the subunit interface close to the decoding center, probably blocks exit of the E-site tRNA. This Clostridium novyi (strain NT) protein is Small ribosomal subunit protein uS7.